The sequence spans 454 residues: Tol-Pal system protein TolB (454 aa).

A signal peptide spans 1–30; it reads MNDARSITRRRFMTLTGSGLAMLGGGHAFA.

The protein belongs to the TolB family. As to quaternary structure, the Tol-Pal system is composed of five core proteins: the inner membrane proteins TolA, TolQ and TolR, the periplasmic protein TolB and the outer membrane protein Pal. They form a network linking the inner and outer membranes and the peptidoglycan layer.

It is found in the periplasm. Part of the Tol-Pal system, which plays a role in outer membrane invagination during cell division and is important for maintaining outer membrane integrity. The polypeptide is Tol-Pal system protein TolB (Bradyrhizobium diazoefficiens (strain JCM 10833 / BCRC 13528 / IAM 13628 / NBRC 14792 / USDA 110)).